The chain runs to 236 residues: uncharacterized protein (236 aa).

Residues 7–74 (RTNRRDIYLK…PKIGSFVSRV (68 aa)) enclose the HTH gntR-type domain. A DNA-binding region (H-T-H motif) is located at residues 34-53 (ENELAASMGVSRTPVRESLI).

This is an uncharacterized protein from Streptomyces ambofaciens.